The primary structure comprises 479 residues: Phosphatidylinositol 4-kinase type 2-alpha (479 aa).

Position 1 is an N-acetylmethionine (M1). The disordered stretch occupies residues 1–58 (MDETSPLVSPERAQPPEYTFPSGSGAHFPQVPGGAVRVAAAAGSGPSPPCSPGHDRER). Residues S5, S9, S44, S47, and S51 each carry the phosphoserine modification. Over residues 31-45 (VPGGAVRVAAAAGSG) the composition is skewed to low complexity. Positions 124–453 (SIYPERIYQG…VQMPPVIVET (330 aa)) constitute a PI3K/PI4K catalytic domain. The tract at residues 130-136 (IYQGSSG) is G-loop. Residues 131–137 (YQGSSGS) and K152 contribute to the ATP site. The important for substrate binding stretch occupies residues 157 to 159 (EPY). The interval 165–178 (KWTKWLQKLCCPCC) is important for interaction with membranes. 4 S-palmitoyl cysteine lipidation sites follow: C174, C175, C177, and C178. 261–264 (QLFV) lines the ATP pocket. The tract at residues 268 to 276 (KDADYWLRR) is important for interaction with membranes. A catalytic loop region spans residues 305 to 313 (RNTDRGNDN). The segment at 344–364 (AIDNGLAFPLKHPDSWRAYPF) is activation loop. D346 contributes to the ATP binding site. The segment at 359 to 368 (WRAYPFYWAW) is important for interaction with membranes. Position 462 is a phosphoserine (S462).

This sequence belongs to the PI3/PI4-kinase family. Type II PI4K subfamily. In terms of assembly, associates with the BLOC-1 and the AP-3 complexes; the BLOC-1 complex is required for optimal binding of PI4K2A to the AP-3 complex. Interacts with BLOC1S5 and DTNBP1. Interacts with ITCH. Interacts with FOS; this interaction may enhance phosphatidylinositol phosphorylation activity. Interacts with ATG9A. In terms of processing, palmitoylated by ZDHHC3 and ZDHHC7 in the CCPCC motif. Palmitoylation is cholesterol-dependent, and required for TGN localization. Ubiquitinated by ITCH; this does not lead to proteasomal degradation. Detected in brain (at protein level).

The protein resides in the golgi apparatus. It localises to the trans-Golgi network membrane. It is found in the membrane raft. Its subcellular location is the endosome. The protein localises to the endosome membrane. The protein resides in the cytoplasmic vesicle. It localises to the cell projection. It is found in the dendrite. Its subcellular location is the presynaptic cell membrane. The protein localises to the synapse. The protein resides in the synaptosome. It localises to the mitochondrion. It is found in the membrane. Its subcellular location is the cell membrane. The protein localises to the perikaryon. The protein resides in the neuron projection. It carries out the reaction a 1,2-diacyl-sn-glycero-3-phospho-(1D-myo-inositol) + ATP = a 1,2-diacyl-sn-glycero-3-phospho-(1D-myo-inositol 4-phosphate) + ADP + H(+). In terms of biological role, membrane-bound phosphatidylinositol-4 kinase (PI4-kinase) that catalyzes the phosphorylation of phosphatidylinositol (PI) to phosphatidylinositol 4-phosphate (PI4P), a lipid that plays important roles in endocytosis, Golgi function, protein sorting and membrane trafficking and is required for prolonged survival of neurons. Besides, phosphorylation of phosphatidylinositol (PI) to phosphatidylinositol 4-phosphate (PI4P) is the first committed step in the generation of phosphatidylinositol 4,5-bisphosphate (PIP2), a precursor of the second messenger inositol 1,4,5-trisphosphate (InsP3). This Mus musculus (Mouse) protein is Phosphatidylinositol 4-kinase type 2-alpha (Pi4k2a).